Here is a 94-residue protein sequence, read N- to C-terminus: Alpha-conotoxin-like Vt20.1 (94 aa).

A signal peptide spans 1-25; it reads MPKLAVVLLVLLILPLSYFDAGGQA. A propeptide spanning residues 26-44 is cleaved from the precursor; it reads VQGDWRGNRLARDLQRGGR. A 4-carboxyglutamate mark is found at Glu-47 and Glu-49. Intrachain disulfides connect Cys-63–Cys-72, Cys-68–Cys-80, Cys-73–Cys-90, and Cys-78–Cys-92.

Belongs to the conotoxin D superfamily. Hetero-, homo- or pseudo-homodimer (identical sequence, different post-translational modifications). Expressed by the venom duct.

It localises to the secreted. Its function is as follows. Alpha-conotoxins act on postsynaptic membranes, they bind to the nicotinic acetylcholine receptors (nAChR) and thus inhibit them. Through its two C-terminal domains, this homodimeric protein would bind to two nAChR allosteric sites, located outside the nAChR C-loop of the principal binding face and at the adjacent binding interface in a clockwise direction. This toxin specifically blocks mammalian neuronal nAChR of the alpha-7/CHRNA7, alpha-3-beta-2/CHRNA3-CHRNB2 and alpha-4-beta-2/CHRNA4-CHRNB2 subtypes. The protein is Alpha-conotoxin-like Vt20.1 of Conus planorbis (Planorbis cone).